The following is a 1312-amino-acid chain: Cyclic GMP-binding protein D (1312 aa).

The N-terminal Ras-GEF domain occupies 26 to 155; sequence GFSAIKSCSL…EFFKAKKMAR (130 aa). 2 stretches are compositionally biased toward low complexity: residues 206-236 and 275-296; these read NTMNGINGTSNNNVNSNNNNNNGTTNISSPN and NGTSPQSSPSSTLSSTNSLFNQ. 2 disordered regions span residues 206–244 and 260–326; these read NTMNGINGTSNNNVNSNNNNNNGTTNISSPNFDPSRSSM and NFNN…NNVN. Positions 297–310 are enriched in polar residues; it reads QPSLSMLNDDGSVQ. The segment covering 311-326 has biased composition (low complexity); the sequence is NNNNNNNNNNNNNNVN. The region spanning 353–582 is the Ras-GEF domain; sequence LPEAIAKELT…FRLSKIREET (230 aa). Residues 586 to 658 are disordered; that stretch reads QSLKESNGIG…NCGNGSGISS (73 aa). Positions 591-612 are enriched in low complexity; it reads SNGIGNSNSTSGGSSSSLVNKD. Residues 613 to 625 show a composition bias toward gly residues; that stretch reads GSGGGGGSGGGGS. A compositionally biased stretch (basic and acidic residues) spans 630-644; the sequence is GDGKGDGKDNRDGRG. A compositionally biased stretch (low complexity) spans 646-657; it reads GNSNCGNGSGIS. Position 698–857 (698–857) interacts with a nucleoside 3',5'-cyclic phosphate; the sequence is VSSTLSEREW…ATFYKFIGVI (160 aa). One can recognise a GRAM domain in the interval 940-1006; sequence SSFRTKFGLS…DKILTVDKNI (67 aa). Residues 1059-1087 are compositionally biased toward low complexity; the sequence is QQQQPSQQPSQQQSQSSQLQQSVSASSTT. Disordered regions lie at residues 1059-1108 and 1167-1210; these read QQQQ…IKDL and NNIN…NSSI. A nucleoside 3',5'-cyclic phosphate is bound by residues 1105–1218 and 1182–1303; these read IKDL…SNTS and NNNN…LACV.

In terms of biological role, promotes the exchange of Ras-bound GDP by GTP. Induces the formation of substrate-attached pseudopodia, that leads to increased adhesion and thereby negatively influencing cell speed and polarity. The chain is Cyclic GMP-binding protein D (gbpD) from Dictyostelium discoideum (Social amoeba).